Consider the following 240-residue polypeptide: LexA repressor (240 aa).

The segment at residues 26 to 46 is a DNA-binding region (H-T-H motif); that stretch reads FDEMKDALDLASKSGIHRLIT. Active-site for autocatalytic cleavage activity residues include serine 160 and lysine 198.

This sequence belongs to the peptidase S24 family. Homodimer.

The catalysed reaction is Hydrolysis of Ala-|-Gly bond in repressor LexA.. Its function is as follows. Represses a number of genes involved in the response to DNA damage (SOS response), including recA and lexA. In the presence of single-stranded DNA, RecA interacts with LexA causing an autocatalytic cleavage which disrupts the DNA-binding part of LexA, leading to derepression of the SOS regulon and eventually DNA repair. The polypeptide is LexA repressor (Agrobacterium fabrum (strain C58 / ATCC 33970) (Agrobacterium tumefaciens (strain C58))).